A 103-amino-acid chain; its full sequence is PTS system lactose-specific EIIA component (103 aa).

The PTS EIIA type-3 domain maps to 1–102 (MNREEVQLLG…MKHLLEFYKR (102 aa)). His-78 (tele-phosphohistidine intermediate) is an active-site residue. His-78 carries the post-translational modification Phosphohistidine; by HPr. Position 81 (Asp-81) interacts with Mg(2+).

As to quaternary structure, homotrimer. Requires Mg(2+) as cofactor.

It is found in the cytoplasm. Functionally, the phosphoenolpyruvate-dependent sugar phosphotransferase system (sugar PTS), a major carbohydrate active transport system, catalyzes the phosphorylation of incoming sugar substrates concomitantly with their translocation across the cell membrane. The enzyme II LacEF PTS system is involved in lactose transport. This is PTS system lactose-specific EIIA component from Staphylococcus aureus (strain COL).